A 355-amino-acid polypeptide reads, in one-letter code: MTGVHEGTVLVTGGAGYIGSHTCVVLLEKGYDVVIVDNLCNSRVEAVHRIEKLTGKKVIFHQVDLLDEPALDKVFANQNISAVIHFAGLKAVGESVQVPLSYYKNNISGTINLIECMKKYNVRDFVFSSSATVYGDPTRPGGTIPIPESCPREGTSPYGRTKLFIENIIEDETKVNKSLNAALLRYFNPGGAHPSGELGEDPLGIPNNLLPYIAQVAVGRLDHLNVFGDDYPTSDGTPIRDYIHVCDLAEAHVAALDYLRQHFVSCRPWNLGSGTGSTVFQVLNAFSKAVGRDLPYKVTPRRAGDVVNLTANPTRANEELKWKTSRSIYEICVDTWRWQQKYPYGFDLTHTKTYK.

8–39 (TVLVTGGAGYIGSHTCVVLLEKGYDVVIVDNL) contributes to the NAD(+) binding site.

This sequence belongs to the NAD(P)-dependent epimerase/dehydratase family. NAD(+) is required as a cofactor.

It catalyses the reaction UDP-alpha-D-glucose = UDP-alpha-D-galactose. It participates in carbohydrate metabolism; galactose metabolism. In terms of biological role, major UDP-glucose/-galactose 4-epimerase under glucose-rich conditions involved in protein galactosylation. In Schizosaccharomyces pombe (strain 972 / ATCC 24843) (Fission yeast), this protein is UDP-glucose 4-epimerase uge1 (uge1).